We begin with the raw amino-acid sequence, 296 residues long: HTH-type transcriptional regulator IlvR (296 aa).

One can recognise an HTH lysR-type domain in the interval 1–58 (MDIRQFRHFAAVAETLHFGRAAERLGITQPPLSQSIQALEKALGAPLFARTKRHVELT). The H-T-H motif DNA-binding region spans 18–37 (FGRAAERLGITQPPLSQSIQ).

Belongs to the LysR transcriptional regulatory family.

Positively regulates the expression of the ilvD gene while negatively autoregulating its own expression. The chain is HTH-type transcriptional regulator IlvR (ilvR) from Caulobacter vibrioides (strain ATCC 19089 / CIP 103742 / CB 15) (Caulobacter crescentus).